We begin with the raw amino-acid sequence, 129 residues long: Replication initiation control protein YabA (129 aa).

Zn(2+) is bound by residues His103, Cys105, Cys119, and Cys122.

This sequence belongs to the YabA family. As to quaternary structure, homotetramer. Interacts with both DnaA and DnaN, acting as a bridge between these two proteins. It depends on Zn(2+) as a cofactor.

Its subcellular location is the cytoplasm. It localises to the nucleoid. Its function is as follows. Involved in control of chromosome replication initiation. Inhibits the cooperative binding of DnaA to the oriC region, thus negatively regulating initiation of chromosome replication. Inhibits the ability of DnaA-ATP to form a helix on DNA; does not disassemble preformed DnaA-DNA helices. Decreases the residence time of DnaA on the chromosome at its binding sites (oriC, replication forks and promoter-binding sites). Tethers DnaA to the replication machinery via the DNA polymerase beta sliding clamp subunit (dnaN). Associates with oriC and other DnaA targets on the chromosome in a DnaA-dependent manner. The polypeptide is Replication initiation control protein YabA (Listeria welshimeri serovar 6b (strain ATCC 35897 / DSM 20650 / CCUG 15529 / CIP 8149 / NCTC 11857 / SLCC 5334 / V8)).